The sequence spans 881 residues: Putative cation exchanger C521.04c (881 aa).

Over residues 1-19 (MSQPADINQSESSAETITQ) the composition is skewed to polar residues. Disordered stretches follow at residues 1–39 (MSQP…EQNL) and 52–142 (ADAT…LRSE). Residues 63-77 (NDRDIYSPREIDQYT) show a composition bias toward basic and acidic residues. Polar residues predominate over residues 83 to 95 (RTDPSTSTISNAR). The segment covering 99–113 (RNSVSRLSRSSSNVR) has biased composition (low complexity). Ser-129 carries the phosphoserine modification. 8 helical membrane-spanning segments follow: residues 200–220 (IWLI…YIFF), 329–349 (LIIA…IFFV), 407–427 (IYII…FGFF), 438–458 (VFLF…IGMA), 471–491 (GAFI…SVAL), 504–524 (IGSI…AGAI), 537–557 (GATS…TMLF), and 594–614 (LPFT…GLWF). The tract at residues 641 to 717 (VGEPVNQDTA…SQNSHGDDAP (77 aa)) is disordered. Positions 646 to 657 (NQDTAGNMSDSS) are enriched in polar residues. The segment covering 678–688 (SSGLSSNGSEN) has biased composition (low complexity). The next 5 helical transmembrane spans lie at 726–746 (IILL…VEHV), 762–782 (LTLF…SFAL), 794–814 (SAYA…YSLF), 828–848 (LFTM…VFLL), and 859–879 (YFKG…FTFF).

This sequence belongs to the Ca(2+):cation antiporter (CaCA) (TC 2.A.19) family.

It is found in the endoplasmic reticulum membrane. In terms of biological role, putative cation exchanger. This is Putative cation exchanger C521.04c from Schizosaccharomyces pombe (strain 972 / ATCC 24843) (Fission yeast).